A 295-amino-acid polypeptide reads, in one-letter code: 4-hydroxy-tetrahydrodipicolinate synthase (295 aa).

Thr-48 is a binding site for pyruvate. Tyr-135 acts as the Proton donor/acceptor in catalysis. Catalysis depends on Lys-163, which acts as the Schiff-base intermediate with substrate. Position 204 (Val-204) interacts with pyruvate.

It belongs to the DapA family. In terms of assembly, homotetramer; dimer of dimers.

Its subcellular location is the cytoplasm. The catalysed reaction is L-aspartate 4-semialdehyde + pyruvate = (2S,4S)-4-hydroxy-2,3,4,5-tetrahydrodipicolinate + H2O + H(+). It participates in amino-acid biosynthesis; L-lysine biosynthesis via DAP pathway; (S)-tetrahydrodipicolinate from L-aspartate: step 3/4. In terms of biological role, catalyzes the condensation of (S)-aspartate-beta-semialdehyde [(S)-ASA] and pyruvate to 4-hydroxy-tetrahydrodipicolinate (HTPA). This chain is 4-hydroxy-tetrahydrodipicolinate synthase, found in Francisella tularensis subsp. novicida (strain U112).